A 398-amino-acid chain; its full sequence is Cysteine desulfurase (398 aa).

Pyridoxal 5'-phosphate contacts are provided by residues 74-75, asparagine 155, glutamine 182, and 202-204; these read GT and CGH. Lysine 205 is modified (N6-(pyridoxal phosphate)lysine). A compositionally biased stretch (basic and acidic residues) spans 230-244; sequence GHQERSRRAGNGERA. Residues 230–253 form a disordered region; it reads GHQERSRRAGNGERAGHRRAGGGA. The active-site Cysteine persulfide intermediate is cysteine 327. Cysteine 327 contacts [2Fe-2S] cluster.

This sequence belongs to the class-V pyridoxal-phosphate-dependent aminotransferase family. NifS/IscS subfamily. In terms of assembly, homodimer. The cofactor is pyridoxal 5'-phosphate.

The catalysed reaction is (sulfur carrier)-H + L-cysteine = (sulfur carrier)-SH + L-alanine. In terms of biological role, catalyzes the removal of elemental sulfur atoms from cysteine to produce alanine. Seems to participate in the biosynthesis of the nitrogenase metalloclusters by providing the inorganic sulfur required for the Fe-S core formation. In Azospirillum brasilense, this protein is Cysteine desulfurase.